A 197-amino-acid chain; its full sequence is Probable inosine/xanthosine triphosphatase (197 aa).

Residue 9-14 (TSNPIK) participates in substrate binding. The Mg(2+) site is built by Asp36 and Asp65.

It belongs to the YjjX NTPase family. As to quaternary structure, homodimer. The cofactor is Mg(2+). Mn(2+) is required as a cofactor.

The catalysed reaction is XTP + H2O = XDP + phosphate + H(+). It catalyses the reaction ITP + H2O = IDP + phosphate + H(+). In terms of biological role, phosphatase that hydrolyzes non-canonical purine nucleotides such as XTP and ITP to their respective diphosphate derivatives. Probably excludes non-canonical purines from DNA/RNA precursor pool, thus preventing their incorporation into DNA/RNA and avoiding chromosomal lesions. In Aeropyrum pernix (strain ATCC 700893 / DSM 11879 / JCM 9820 / NBRC 100138 / K1), this protein is Probable inosine/xanthosine triphosphatase.